A 316-amino-acid polypeptide reads, in one-letter code: Transaldolase B (316 aa).

Lys131 acts as the Schiff-base intermediate with substrate in catalysis.

This sequence belongs to the transaldolase family. Type 1 subfamily. Homodimer.

It localises to the cytoplasm. It carries out the reaction D-sedoheptulose 7-phosphate + D-glyceraldehyde 3-phosphate = D-erythrose 4-phosphate + beta-D-fructose 6-phosphate. It functions in the pathway carbohydrate degradation; pentose phosphate pathway; D-glyceraldehyde 3-phosphate and beta-D-fructose 6-phosphate from D-ribose 5-phosphate and D-xylulose 5-phosphate (non-oxidative stage): step 2/3. Functionally, transaldolase is important for the balance of metabolites in the pentose-phosphate pathway. The polypeptide is Transaldolase B (talB) (Pasteurella multocida (strain Pm70)).